We begin with the raw amino-acid sequence, 367 residues long: 2-aminoethylphosphonate--pyruvate transaminase (367 aa).

The residue at position 194 (Lys-194) is an N6-(pyridoxal phosphate)lysine.

It belongs to the class-V pyridoxal-phosphate-dependent aminotransferase family. PhnW subfamily. As to quaternary structure, homodimer. It depends on pyridoxal 5'-phosphate as a cofactor.

The catalysed reaction is (2-aminoethyl)phosphonate + pyruvate = phosphonoacetaldehyde + L-alanine. Involved in phosphonate degradation. The sequence is that of 2-aminoethylphosphonate--pyruvate transaminase from Salmonella heidelberg (strain SL476).